Consider the following 118-residue polypeptide: Large ribosomal subunit protein bL20 (118 aa).

Belongs to the bacterial ribosomal protein bL20 family.

Binds directly to 23S ribosomal RNA and is necessary for the in vitro assembly process of the 50S ribosomal subunit. It is not involved in the protein synthesizing functions of that subunit. This is Large ribosomal subunit protein bL20 from Lactobacillus johnsonii (strain CNCM I-12250 / La1 / NCC 533).